The primary structure comprises 1327 residues: Kinectin (1327 aa).

The Cytoplasmic segment spans residues 1–8 (MELYESTY). The chain crosses the membrane as a helical; Signal-anchor for type II membrane protein span at residues 9–29 (FIVLIPSVVITVIFLFFWLFM). Topologically, residues 30–1327 (KETLYDEVLA…EVNQQLTKET (1298 aa)) are lumenal. Disordered stretches follow at residues 49 to 181 (STKT…EQDK) and 197 to 216 (LSHQ…GLSK). Residue N69 is glycosylated (N-linked (GlcNAc...) asparagine). Composition is skewed to basic and acidic residues over residues 73 to 86 (RESD…DFKL) and 111 to 135 (VRER…ESDA). S75 and S77 each carry phosphoserine. Basic residues predominate over residues 163-173 (LKKKAGQKKSK). Residues 329 to 1327 (ELSGLLHQLQ…EVNQQLTKET (999 aa)) adopt a coiled-coil conformation. N1031 is a glycosylation site (N-linked (GlcNAc...) asparagine). At S1060 the chain carries Phosphoserine. N-linked (GlcNAc...) asparagine glycosylation occurs at N1066. The residue at position 1290 (S1290) is a Phosphoserine.

The protein belongs to the kinectin family. Expressed in all tissues examined including 12-day embryo, adult heart, brain, ovary, kidney, lung, small intestine, spleen, thymus and pancreas.

The protein resides in the endoplasmic reticulum membrane. In terms of biological role, receptor for kinesin thus involved in kinesin-driven vesicle motility. Accumulates in integrin-based adhesion complexes (IAC) upon integrin aggregation by fibronectin. The chain is Kinectin from Mus musculus (Mouse).